The sequence spans 106 residues: ATP-dependent Clp protease adapter protein ClpS (106 aa).

The segment covering 1–10 (MSQKTVHDQD) has biased composition (basic and acidic residues). Positions 1–22 (MSQKTVHDQDNALLLETGNTKV) are disordered.

This sequence belongs to the ClpS family. In terms of assembly, binds to the N-terminal domain of the chaperone ClpA.

Involved in the modulation of the specificity of the ClpAP-mediated ATP-dependent protein degradation. The protein is ATP-dependent Clp protease adapter protein ClpS of Xylella fastidiosa (strain 9a5c).